Here is a 338-residue protein sequence, read N- to C-terminus: Aspartate-semialdehyde dehydrogenase (338 aa).

NADP(+) is bound by residues 13 to 16 (SGAV) and 41 to 42 (RS). Residue arginine 101 participates in phosphate binding. Cysteine 132 acts as the Acyl-thioester intermediate in catalysis. Glutamine 159 is a substrate binding site. 162-163 (SG) is a binding site for NADP(+). Position 216 (lysine 216) interacts with phosphate. Arginine 238 lines the substrate pocket. The active-site Proton acceptor is histidine 245. Asparagine 317 is a binding site for NADP(+).

The protein belongs to the aspartate-semialdehyde dehydrogenase family. Homodimer.

The enzyme catalyses L-aspartate 4-semialdehyde + phosphate + NADP(+) = 4-phospho-L-aspartate + NADPH + H(+). It functions in the pathway amino-acid biosynthesis; L-lysine biosynthesis via DAP pathway; (S)-tetrahydrodipicolinate from L-aspartate: step 2/4. The protein operates within amino-acid biosynthesis; L-methionine biosynthesis via de novo pathway; L-homoserine from L-aspartate: step 2/3. It participates in amino-acid biosynthesis; L-threonine biosynthesis; L-threonine from L-aspartate: step 2/5. In terms of biological role, catalyzes the NADPH-dependent formation of L-aspartate-semialdehyde (L-ASA) by the reductive dephosphorylation of L-aspartyl-4-phosphate. The chain is Aspartate-semialdehyde dehydrogenase from Shewanella violacea (strain JCM 10179 / CIP 106290 / LMG 19151 / DSS12).